Consider the following 203-residue polypeptide: High-molecular weight cobalt-containing nitrile hydratase subunit alpha (203 aa).

The Co(3+) site is built by cysteine 102, cysteine 105, serine 106, and cysteine 107.

The protein belongs to the nitrile hydratase subunit alpha family. In terms of assembly, heterodimer of an alpha and a beta chain. Requires Co(3+) as cofactor.

It catalyses the reaction an aliphatic primary amide = an aliphatic nitrile + H2O. Functionally, NHase catalyzes the hydration of various nitrile compounds to the corresponding amides. In Rhodococcus rhodochrous, this protein is High-molecular weight cobalt-containing nitrile hydratase subunit alpha (nhhA).